Reading from the N-terminus, the 281-residue chain is Transcription factor E2F6 (281 aa).

K9 participates in a covalent cross-link: Glycyl lysine isopeptide (Lys-Gly) (interchain with G-Cter in SUMO2). A DNA-binding region spans residues 50–129 (YVSMRKALKV…SKNHIRWIGS (80 aa)). Residues 95–129 (KLGVRKRRVYDITNVLDGIDLVEKKSKNHIRWIGS) carry the DEF box motif. The dimerization stretch occupies residues 130-222 (DLSNFGAVPQ…PAPREDSITV (93 aa)). Residues 143–164 (LQEELSDLSAMEDALDELIKDC) are leucine-zipper. Residues 173 to 281 (DDKENERLAY…QSEELLEVSN (109 aa)) are transcription repression. The segment at 241 to 281 (GQTSNKRSEGVGTSSSESTHPEGPEEEENPQQSEELLEVSN) is disordered.

Belongs to the E2F/DP family. In terms of assembly, forms heterodimers with DP family members TFDP1 or TFDP2. Component of the DRTF1/E2F transcription factor complex. Part of the E2F6.com-1 complex in G0 phase composed of E2F6, MGA, MAX, TFDP1, CBX3, BAT8, EUHMTASE1, RING1, RNF2, MBLR, L3MBTL2 and YAF2. Component of some MLL1/MLL complex, at least composed of the core components KMT2A/MLL1, ASH2L, HCFC1/HCF1, WDR5 and RBBP5, as well as the facultative components BACC1, CHD8, E2F6, HSP70, INO80C, KANSL1, LAS1L, MAX, MCRS1, MGA, KAT8/MOF, PELP1, PHF20, PRP31, RING2, RUVB1/TIP49A, RUVB2/TIP49B, SENP3, TAF1, TAF4, TAF6, TAF7, TAF9 and TEX10. In terms of tissue distribution, expressed in all tissues examined. Highest levels in placenta, skeletal muscle, heart, ovary, kidney, small intestine and spleen.

The protein resides in the nucleus. Functionally, inhibitor of E2F-dependent transcription. Binds DNA cooperatively with DP proteins through the E2 recognition site, 5'-TTTC[CG]CGC-3'. Has a preference for the 5'-TTTCCCGC-3' E2F recognition site. E2F6 lacks the transcriptional activation and pocket protein binding domains. Appears to regulate a subset of E2F-dependent genes whose products are required for entry into the cell cycle but not for normal cell cycle progression. Represses expression of some meiosis-specific genes, including SLC25A31/ANT4. May silence expression via the recruitment of a chromatin remodeling complex containing histone H3-K9 methyltransferase activity. Overexpression delays the exit of cells from the S-phase. This Homo sapiens (Human) protein is Transcription factor E2F6.